Consider the following 336-residue polypeptide: MPKINLLLLCGGGGAEHDISLMSARFFESSLAKSDKFSVLKLVLDKHGHYHTEDGKLCDLTNRREIRFEDNSTPAWSVDYVIPCIHGFPGETGDIQSYFNLIQLPYFGCESEASSNCFNKITAKMWFSALGVPNTPYIFLHQLDDDAIKQTETAFDNWGSVFVKAASQGSSVGCYKVDVKANIANVLKDAFSYAPYVVVEQTIHARELEVAVYQYQGEVVATLPGEIICDSNTFYSFDEKYATNSKARTDVVADNLSPEISQLIRDYAVKAFKGMKLRHLSRIDFFLTADNQILLNEINTFPGLTPISMFPKMLQNHGHNFTEYLIDVIGQQVDLT.

Residues 124–330 (KMWFSALGVP…FTEYLIDVIG (207 aa)) form the ATP-grasp domain. 154 to 209 (AFDNWGSVFVKAASQGSSVGCYKVDVKANIANVLKDAFSYAPYVVVEQTIHARELE) provides a ligand contact to ATP. Mg(2+) is bound by residues aspartate 284, glutamate 297, and asparagine 299.

The protein belongs to the D-alanine--D-alanine ligase family. It depends on Mg(2+) as a cofactor. The cofactor is Mn(2+).

The protein localises to the cytoplasm. The catalysed reaction is 2 D-alanine + ATP = D-alanyl-D-alanine + ADP + phosphate + H(+). The protein operates within cell wall biogenesis; peptidoglycan biosynthesis. Cell wall formation. This is D-alanine--D-alanine ligase from Shewanella frigidimarina (strain NCIMB 400).